The primary structure comprises 256 residues: Protein crossbronx-like (256 aa).

Residues 17–179 form the UBC core domain; sequence NQGYQVLAEY…AKASIVWSWK (163 aa).

This sequence belongs to the ubiquitin-conjugating enzyme family. FTS subfamily.

In Drosophila mojavensis (Fruit fly), this protein is Protein crossbronx-like.